The chain runs to 366 residues: D-alanine--D-alanine ligase (366 aa).

Residues 145–348 form the ATP-grasp domain; sequence KRLLDDAGLA…YQSLITKLIE (204 aa). Position 175–230 (175–230) interacts with ATP; sequence VEQLGLPLFIKPANLGSSVGISKVNNEAEFNAALSMAFEYDLKVIIESAIVGREIE. Positions 302, 315, and 317 each coordinate Mg(2+).

It belongs to the D-alanine--D-alanine ligase family. Mg(2+) is required as a cofactor. It depends on Mn(2+) as a cofactor.

It localises to the cytoplasm. The enzyme catalyses 2 D-alanine + ATP = D-alanyl-D-alanine + ADP + phosphate + H(+). It functions in the pathway cell wall biogenesis; peptidoglycan biosynthesis. Functionally, cell wall formation. The polypeptide is D-alanine--D-alanine ligase (Proteus mirabilis (strain HI4320)).